We begin with the raw amino-acid sequence, 208 residues long: Thymidylate kinase (208 aa).

Residue 7 to 14 (GIDGAGKT) participates in ATP binding.

Belongs to the thymidylate kinase family.

The enzyme catalyses dTMP + ATP = dTDP + ADP. Functionally, phosphorylation of dTMP to form dTDP in both de novo and salvage pathways of dTTP synthesis. This chain is Thymidylate kinase (tmk), found in Xylella fastidiosa (strain 9a5c).